The sequence spans 154 residues: 6,7-dimethyl-8-ribityllumazine synthase (154 aa).

5-amino-6-(D-ribitylamino)uracil is bound by residues F15, 47–49, and 71–73; these read TFD and AVI. 76 to 77 provides a ligand contact to (2S)-2-hydroxy-3-oxobutyl phosphate; the sequence is ET. Catalysis depends on H79, which acts as the Proton donor. L104 lines the 5-amino-6-(D-ribitylamino)uracil pocket. A (2S)-2-hydroxy-3-oxobutyl phosphate-binding site is contributed by R119.

It belongs to the DMRL synthase family.

It carries out the reaction (2S)-2-hydroxy-3-oxobutyl phosphate + 5-amino-6-(D-ribitylamino)uracil = 6,7-dimethyl-8-(1-D-ribityl)lumazine + phosphate + 2 H2O + H(+). The protein operates within cofactor biosynthesis; riboflavin biosynthesis; riboflavin from 2-hydroxy-3-oxobutyl phosphate and 5-amino-6-(D-ribitylamino)uracil: step 1/2. In terms of biological role, catalyzes the formation of 6,7-dimethyl-8-ribityllumazine by condensation of 5-amino-6-(D-ribitylamino)uracil with 3,4-dihydroxy-2-butanone 4-phosphate. This is the penultimate step in the biosynthesis of riboflavin. The chain is 6,7-dimethyl-8-ribityllumazine synthase from Saccharolobus islandicus (strain M.16.27) (Sulfolobus islandicus).